The primary structure comprises 331 residues: ATPase GET3 (331 aa).

Position 32-39 (32-39 (KGGVGKTT)) interacts with ATP. Residue D61 is part of the active site. 2 residues coordinate ATP: E235 and N262. Zn(2+) contacts are provided by C273 and C276.

Belongs to the arsA ATPase family. Homodimer.

It is found in the cytoplasm. The protein resides in the endoplasmic reticulum. Functionally, ATPase required for the post-translational delivery of tail-anchored (TA) proteins to the endoplasmic reticulum. Recognizes and selectively binds the transmembrane domain of TA proteins in the cytosol. This complex then targets to the endoplasmic reticulum by membrane-bound receptors, where the tail-anchored protein is released for insertion. This process is regulated by ATP binding and hydrolysis. ATP binding drives the homodimer towards the closed dimer state, facilitating recognition of newly synthesized TA membrane proteins. ATP hydrolysis is required for insertion. Subsequently, the homodimer reverts towards the open dimer state, lowering its affinity for the membrane-bound receptor, and returning it to the cytosol to initiate a new round of targeting. This Malassezia globosa (strain ATCC MYA-4612 / CBS 7966) (Dandruff-associated fungus) protein is ATPase GET3.